The following is a 402-amino-acid chain: Uroporphyrinogen decarboxylase 1, chloroplastic (402 aa).

A chloroplast-targeting transit peptide spans 1 to 50 (MISATATAAFLAAAPASSSSCTTHRRRSGLPAISASLATASSTEEPLLVR). Residues 67–71 (RQAGR), F86, S116, D117, Y193, S248, and H363 contribute to the substrate site.

This sequence belongs to the uroporphyrinogen decarboxylase family. Homodimer.

The protein resides in the plastid. It is found in the chloroplast. It catalyses the reaction uroporphyrinogen III + 4 H(+) = coproporphyrinogen III + 4 CO2. It functions in the pathway porphyrin-containing compound metabolism; protoporphyrin-IX biosynthesis; coproporphyrinogen-III from 5-aminolevulinate: step 4/4. Functionally, catalyzes the decarboxylation of four acetate groups of uroporphyrinogen-III to yield coproporphyrinogen-III. In Oryza sativa subsp. japonica (Rice), this protein is Uroporphyrinogen decarboxylase 1, chloroplastic.